Reading from the N-terminus, the 315-residue chain is DNA-directed RNA polymerase subunit alpha (315 aa).

Residues 1-228 (MLEIEKPIIE…EHFKLFMSLT (228 aa)) are alpha N-terminal domain (alpha-NTD). Positions 245-315 (KEKVLEMTVE…LGLALKLTEE (71 aa)) are alpha C-terminal domain (alpha-CTD).

This sequence belongs to the RNA polymerase alpha chain family. As to quaternary structure, homodimer. The RNAP catalytic core consists of 2 alpha, 1 beta, 1 beta' and 1 omega subunit. When a sigma factor is associated with the core the holoenzyme is formed, which can initiate transcription.

The catalysed reaction is RNA(n) + a ribonucleoside 5'-triphosphate = RNA(n+1) + diphosphate. In terms of biological role, DNA-dependent RNA polymerase catalyzes the transcription of DNA into RNA using the four ribonucleoside triphosphates as substrates. This chain is DNA-directed RNA polymerase subunit alpha, found in Clostridium beijerinckii (strain ATCC 51743 / NCIMB 8052) (Clostridium acetobutylicum).